The sequence spans 60 residues: Metallothionein (60 aa).

The beta stretch occupies residues methionine 1 to lysine 28. A divalent metal cation is bound by residues cysteine 3, cysteine 5, cysteine 11, cysteine 13, cysteine 17, cysteine 19, cysteine 22, cysteine 24, cysteine 27, cysteine 31, cysteine 32, cysteine 34, cysteine 35, cysteine 39, cysteine 42, cysteine 46, cysteine 48, cysteine 56, cysteine 58, and cysteine 59. Positions lysine 29–asparagine 60 are alpha.

Belongs to the metallothionein superfamily. Type 1 family.

Functionally, metallothioneins have a high content of cysteine residues that bind various heavy metals. The chain is Metallothionein (MT-A) from Ambystoma mexicanum (Axolotl).